A 232-amino-acid polypeptide reads, in one-letter code: Chalcone--flavanone isomerase (232 aa).

2 residues coordinate substrate: Thr-50 and Ser-192.

Belongs to the chalcone isomerase family.

It carries out the reaction a chalcone = a flavanone.. The protein operates within secondary metabolite biosynthesis; flavonoid biosynthesis. In terms of biological role, catalyzes the intramolecular cyclization of bicyclic chalcones into tricyclic (S)-flavanones. Responsible for the isomerization of 4,2',4',6'-tetrahydroxychalcone (also termed chalcone) into naringenin. The polypeptide is Chalcone--flavanone isomerase (CHI) (Saussurea medusa (Saw-wort)).